The following is a 275-amino-acid chain: MTRKIAFYGKGGIGKSTTQQNTAAAMAYYHGKKIFIHGCDPKADCTRLVLGGVAQTTIMDTLRELGEDAVTAENVINTGFDGIKCVESGGPEPGVGCAGRGVITAINLMEEMGAYSEDLDFIHFDVLGDVVCGGFAMPIREGKAQEVYIVASGEMMATYAANNICKGLLKYAEQSGVRLGGIICNSRRVDNELEMMEEFASALGTQLLYFVPRDNIVQKAEFNKKTVVEYDPTCNQALEYKELAKKILENDMFVIPKPLSMDQLEKMVERYGLMD.

9 to 16 contacts ATP; the sequence is GKGGIGKS. Cys-97 contributes to the [4Fe-4S] cluster binding site. Residue Arg-100 is modified to ADP-ribosylarginine; by dinitrogenase reductase ADP-ribosyltransferase. Cys-132 lines the [4Fe-4S] cluster pocket.

It belongs to the NifH/BchL/ChlL family. Homodimer. Requires [4Fe-4S] cluster as cofactor. In terms of processing, the reversible ADP-ribosylation of Arg-100 inactivates the nitrogenase reductase and regulates nitrogenase activity.

It carries out the reaction N2 + 8 reduced [2Fe-2S]-[ferredoxin] + 16 ATP + 16 H2O = H2 + 8 oxidized [2Fe-2S]-[ferredoxin] + 2 NH4(+) + 16 ADP + 16 phosphate + 6 H(+). Functionally, the key enzymatic reactions in nitrogen fixation are catalyzed by the nitrogenase complex, which has 2 components: the iron protein and the molybdenum-iron protein. In Methanosarcina barkeri, this protein is Nitrogenase iron protein 1 (nifH1).